The sequence spans 211 residues: ATP-dependent dethiobiotin synthetase BioD (211 aa).

Residue Gly13–Val18 coordinates ATP. Residue Thr17 coordinates Mg(2+). The active site involves Lys33. Mg(2+) is bound by residues Cys47 and Glu101. Residues Glu101–Gly104, Pro185–Leu187, and Asn192 each bind ATP.

The protein belongs to the dethiobiotin synthetase family. Homodimer. Requires Mg(2+) as cofactor.

Its subcellular location is the cytoplasm. It carries out the reaction (7R,8S)-7,8-diammoniononanoate + CO2 + ATP = (4R,5S)-dethiobiotin + ADP + phosphate + 3 H(+). It functions in the pathway cofactor biosynthesis; biotin biosynthesis; biotin from 7,8-diaminononanoate: step 1/2. Its function is as follows. Catalyzes a mechanistically unusual reaction, the ATP-dependent insertion of CO2 between the N7 and N8 nitrogen atoms of 7,8-diaminopelargonic acid (DAPA, also called 7,8-diammoniononanoate) to form a ureido ring. The sequence is that of ATP-dependent dethiobiotin synthetase BioD from Bradyrhizobium diazoefficiens (strain JCM 10833 / BCRC 13528 / IAM 13628 / NBRC 14792 / USDA 110).